A 431-amino-acid polypeptide reads, in one-letter code: L-cysteine:1D-myo-inositol 2-amino-2-deoxy-alpha-D-glucopyranoside ligase (431 aa).

Position 44 (Cys44) interacts with Zn(2+). L-cysteinyl-5'-AMP is bound by residues 44-47, Thr59, and 82-84; these read CGIT and NVT. The 'HIGH' region motif lies at 46–56; the sequence is ITPYDATHLGH. Residues 187–192 carry the 'ERGGDP' region motif; it reads ERGGDP. Trp227 is an L-cysteinyl-5'-AMP binding site. Residue Cys231 participates in Zn(2+) binding. Residue 249-251 coordinates L-cysteinyl-5'-AMP; it reads GND. A Zn(2+)-binding site is contributed by His256. An L-cysteinyl-5'-AMP-binding site is contributed by Ile283. The short motif at 289-293 is the 'KMSKS' region element; sequence KMSKS.

Belongs to the class-I aminoacyl-tRNA synthetase family. MshC subfamily. As to quaternary structure, monomer. Zn(2+) serves as cofactor.

It carries out the reaction 1D-myo-inositol 2-amino-2-deoxy-alpha-D-glucopyranoside + L-cysteine + ATP = 1D-myo-inositol 2-(L-cysteinylamino)-2-deoxy-alpha-D-glucopyranoside + AMP + diphosphate + H(+). Catalyzes the ATP-dependent condensation of GlcN-Ins and L-cysteine to form L-Cys-GlcN-Ins. The sequence is that of L-cysteine:1D-myo-inositol 2-amino-2-deoxy-alpha-D-glucopyranoside ligase from Stackebrandtia nassauensis (strain DSM 44728 / CIP 108903 / NRRL B-16338 / NBRC 102104 / LLR-40K-21).